The primary structure comprises 147 residues: Hemoglobin subunit epsilon (147 aa).

The Globin domain maps to 3–147; sequence HFTAEEKAAV…VAIALAHKYH (145 aa). Phosphoserine is present on residues Ser-14 and Ser-51. Heme b is bound by residues His-64 and His-93.

The protein belongs to the globin family. In terms of assembly, heterotetramer of two alpha chains and two epsilon chains in early embryonic hemoglobin Gower-2; two zeta chains and two epsilon chains in early embryonic hemoglobin Gower-1. As to expression, red blood cells.

Functionally, the epsilon chain is a beta-type chain of early mammalian embryonic hemoglobin. This Pongo pygmaeus (Bornean orangutan) protein is Hemoglobin subunit epsilon (HBE1).